The primary structure comprises 331 residues: MSDSRLVDPFGRRITYLRLSVTDRCDFRCTYCMSEDMQFLPRDQVLSLEELYAVADAFIGLGVRRIRITGGEPLVRKGITGLLARLGQRAELEDLAITTNGSQLRERAAELKAAGVRRLNVSLDSLQRERFAAFTRSDRLEQVLDGIQAAREAGFERIKLNCVVQKGRNDDEILDLVEYALANQLDISFIEEMPLGSITSHRRELTLCTSDEVRAIIERRWPLTPSLARSGGPSRYYQIGDEPSRIGFISPHSNNFCGDCNRVRVTAEGKLVLCLGHEGALDLRELLRSHPGDRERLSAALVAALNLKPERHHFDAQEQVQVLRFMSMTGG.

One can recognise a Radical SAM core domain in the interval 9 to 234 (PFGRRITYLR…PSLARSGGPS (226 aa)). Arginine 18 is a binding site for GTP. Residues cysteine 25 and cysteine 29 each coordinate [4Fe-4S] cluster. Tyrosine 31 lines the S-adenosyl-L-methionine pocket. Cysteine 32 contributes to the [4Fe-4S] cluster binding site. Arginine 67 lines the GTP pocket. Glycine 71 is an S-adenosyl-L-methionine binding site. Threonine 98 is a binding site for GTP. Serine 122 is a binding site for S-adenosyl-L-methionine. Lysine 159 contacts GTP. Methionine 193 contributes to the S-adenosyl-L-methionine binding site. [4Fe-4S] cluster-binding residues include cysteine 257 and cysteine 260. Position 262-264 (262-264 (RVR)) interacts with GTP. Position 274 (cysteine 274) interacts with [4Fe-4S] cluster.

It belongs to the radical SAM superfamily. MoaA family. Monomer and homodimer. [4Fe-4S] cluster serves as cofactor.

The catalysed reaction is GTP + AH2 + S-adenosyl-L-methionine = (8S)-3',8-cyclo-7,8-dihydroguanosine 5'-triphosphate + 5'-deoxyadenosine + L-methionine + A + H(+). It functions in the pathway cofactor biosynthesis; molybdopterin biosynthesis. In terms of biological role, catalyzes the cyclization of GTP to (8S)-3',8-cyclo-7,8-dihydroguanosine 5'-triphosphate. The protein is GTP 3',8-cyclase 2 (moaA2) of Pseudomonas aeruginosa (strain ATCC 15692 / DSM 22644 / CIP 104116 / JCM 14847 / LMG 12228 / 1C / PRS 101 / PAO1).